We begin with the raw amino-acid sequence, 262 residues long: Adenosylcobinamide-GDP ribazoletransferase (262 aa).

Helical transmembrane passes span 43-63, 66-86, 120-140, 146-166, 191-211, and 242-262; these read YFGL…WLTQ, LPAG…TGGF, GALA…ELAL, AGSA…SIIF, LLIL…LAAL, and AAQQ…GNIL.

It belongs to the CobS family. It depends on Mg(2+) as a cofactor.

The protein localises to the cell inner membrane. It carries out the reaction alpha-ribazole + adenosylcob(III)inamide-GDP = adenosylcob(III)alamin + GMP + H(+). It catalyses the reaction alpha-ribazole 5'-phosphate + adenosylcob(III)inamide-GDP = adenosylcob(III)alamin 5'-phosphate + GMP + H(+). Its pathway is cofactor biosynthesis; adenosylcobalamin biosynthesis; adenosylcobalamin from cob(II)yrinate a,c-diamide: step 7/7. Joins adenosylcobinamide-GDP and alpha-ribazole to generate adenosylcobalamin (Ado-cobalamin). Also synthesizes adenosylcobalamin 5'-phosphate from adenosylcobinamide-GDP and alpha-ribazole 5'-phosphate. The protein is Adenosylcobinamide-GDP ribazoletransferase of Shewanella baltica (strain OS155 / ATCC BAA-1091).